A 248-amino-acid polypeptide reads, in one-letter code: Ureidoacrylate amidohydrolase RutB (248 aa).

The active-site Proton acceptor is the Asp-41. The active site involves Lys-150. Cys-183 functions as the Nucleophile in the catalytic mechanism.

The protein belongs to the isochorismatase family. RutB subfamily.

The enzyme catalyses (Z)-3-ureidoacrylate + H2O + H(+) = (Z)-3-aminoacrylate + NH4(+) + CO2. The catalysed reaction is (Z)-3-ureidoacrylate + H2O = (Z)-3-aminoacrylate + carbamate + H(+). It carries out the reaction (Z)-2-methylureidoacrylate + H2O + H(+) = (Z)-2-methylaminoacrylate + NH4(+) + CO2. Hydrolyzes ureidoacrylate to form aminoacrylate and carbamate. The carbamate hydrolyzes spontaneously, thereby releasing one of the nitrogen atoms of the pyrimidine ring as ammonia and one of its carbon atoms as CO2. The protein is Ureidoacrylate amidohydrolase RutB of Stutzerimonas stutzeri (strain A1501) (Pseudomonas stutzeri).